Here is a 440-residue protein sequence, read N- to C-terminus: 3-phosphoshikimate 1-carboxyvinyltransferase (440 aa).

3-phosphoshikimate contacts are provided by Lys-19, Ser-20, and Arg-24. Lys-19 contributes to the phosphoenolpyruvate binding site. Phosphoenolpyruvate is bound by residues Gly-92 and Arg-121. Residues Ser-166, Gln-168, Asp-315, and Lys-342 each contribute to the 3-phosphoshikimate site. Position 168 (Gln-168) interacts with phosphoenolpyruvate. The active-site Proton acceptor is the Asp-315. Arg-346 and Arg-399 together coordinate phosphoenolpyruvate.

Belongs to the EPSP synthase family. Monomer.

Its subcellular location is the cytoplasm. It catalyses the reaction 3-phosphoshikimate + phosphoenolpyruvate = 5-O-(1-carboxyvinyl)-3-phosphoshikimate + phosphate. It functions in the pathway metabolic intermediate biosynthesis; chorismate biosynthesis; chorismate from D-erythrose 4-phosphate and phosphoenolpyruvate: step 6/7. Catalyzes the transfer of the enolpyruvyl moiety of phosphoenolpyruvate (PEP) to the 5-hydroxyl of shikimate-3-phosphate (S3P) to produce enolpyruvyl shikimate-3-phosphate and inorganic phosphate. This Leptospira interrogans serogroup Icterohaemorrhagiae serovar Lai (strain 56601) protein is 3-phosphoshikimate 1-carboxyvinyltransferase.